A 510-amino-acid chain; its full sequence is Ribonuclease Y (510 aa).

The chain crosses the membrane as a helical span at residues 2-22 (IYIIFSSIFAGFILGFLVRVF). Residues 198–258 (TVASVELPND…IRKELAKRTL (61 aa)) form the KH domain. The HD domain maps to 324–419 (VLSHSKETAI…VQIADAISAS (96 aa)).

This sequence belongs to the RNase Y family.

The protein resides in the cell membrane. Functionally, endoribonuclease that initiates mRNA decay. This Borrelia garinii subsp. bavariensis (strain ATCC BAA-2496 / DSM 23469 / PBi) (Borreliella bavariensis) protein is Ribonuclease Y.